Here is a 425-residue protein sequence, read N- to C-terminus: Glutamyl-tRNA reductase (425 aa).

Substrate is bound by residues 47–50, Ser107, 112–114, and Gln118; these read TCNR and EDQ. The active-site Nucleophile is the Cys48. Residue 187–192 coordinates NADP(+); that stretch reads GAGHIA.

This sequence belongs to the glutamyl-tRNA reductase family. In terms of assembly, homodimer.

It catalyses the reaction (S)-4-amino-5-oxopentanoate + tRNA(Glu) + NADP(+) = L-glutamyl-tRNA(Glu) + NADPH + H(+). It participates in porphyrin-containing compound metabolism; protoporphyrin-IX biosynthesis; 5-aminolevulinate from L-glutamyl-tRNA(Glu): step 1/2. It functions in the pathway porphyrin-containing compound metabolism; chlorophyll biosynthesis. In terms of biological role, catalyzes the NADPH-dependent reduction of glutamyl-tRNA(Glu) to glutamate 1-semialdehyde (GSA). This chain is Glutamyl-tRNA reductase, found in Roseiflexus sp. (strain RS-1).